Here is a 502-residue protein sequence, read N- to C-terminus: Transmembrane prolyl 4-hydroxylase (502 aa).

The interval 1–29 (MAAAAVTGQRPETAAAEEASRPQWAPPDH) is disordered. Residues 1-60 (MAAAAVTGQRPETAAAEEASRPQWAPPDHCQAQAAAGLGDGEDAPVRPLCKPRGICSRAY) are Cytoplasmic-facing. The chain crosses the membrane as a helical; Signal-anchor for type II membrane protein span at residues 61–81 (FLVLMVFVHLYLGNVLALLLF). The Lumenal portion of the chain corresponds to 82 to 502 (VHYSNGDESS…RAYRDARVEL (421 aa)). The tract at residues 89 to 111 (ESSDPGPQHRAQGPGPEPTLGPL) is disordered. EF-hand domains follow at residues 185 to 220 (TMQVSQLDLFRLLDQNRDGHLQLREVLAQTRLGNGW) and 224 to 259 (PESIQEMYAAIKADPDGDGVLSLQEFSNMDLRDFHK). Ca(2+) contacts are provided by aspartate 198, asparagine 200, aspartate 202, histidine 204, glutamate 209, aspartate 237, aspartate 239, aspartate 241, and glutamate 248. Residues 310-460 (LSEPLQVVRY…KWIANNWINV (151 aa)) form the Fe2OG dioxygenase domain. Fe cation is bound by residues histidine 328 and aspartate 330. N-linked (GlcNAc...) asparagine glycosylation is found at asparagine 348 and asparagine 368. A Fe cation-binding site is contributed by glutamate 374. Asparagine 382 is a glycosylation site (N-linked (GlcNAc...) asparagine). Lysine 451 serves as a coordination point for 2-oxoglutarate.

In terms of assembly, homodimer. Requires Fe(2+) as cofactor. L-ascorbate is required as a cofactor. Post-translationally, glycosylated. As to expression, widely expressed with highest levels in adult pancreas, heart, skeletal muscle, brain, placenta, kidney and adrenal gland. Expressed at lower levels in epiphyseal cartilage and in fibroblasts.

It is found in the endoplasmic reticulum membrane. The catalysed reaction is L-prolyl-[hypoxia-inducible factor alpha subunit] + 2-oxoglutarate + O2 = trans-4-hydroxy-L-prolyl-[hypoxia-inducible factor alpha subunit] + succinate + CO2. Its function is as follows. Catalyzes the post-translational formation of 4-hydroxyproline in hypoxia-inducible factor (HIF) alpha proteins. Hydroxylates HIF1A at 'Pro-402' and 'Pro-564'. May function as a cellular oxygen sensor and, under normoxic conditions, may target HIF through the hydroxylation for proteasomal degradation via the von Hippel-Lindau ubiquitination complex. The sequence is that of Transmembrane prolyl 4-hydroxylase (P4HTM) from Homo sapiens (Human).